An 84-amino-acid chain; its full sequence is Putative defensin-like protein 139 (84 aa).

Positions 1–28 (MEPSNQIFFYLRRSKLLSGLGEIRMAKG) are cleaved as a signal peptide. Intrachain disulfides connect cysteine 37–cysteine 81, cysteine 46–cysteine 65, cysteine 51–cysteine 75, and cysteine 55–cysteine 77.

It belongs to the DEFL family.

The protein resides in the secreted. In Arabidopsis thaliana (Mouse-ear cress), this protein is Putative defensin-like protein 139 (LCR7).